Reading from the N-terminus, the 677-residue chain is Secretogranin-1 (677 aa).

The N-terminal stretch at 1 to 20 (MQPAMLLGLLGAAALAAVSS) is a signal peptide. C36 and C57 are joined by a disulfide. Disordered stretches follow at residues 63–505 (KSGK…RQYE) and 531–558 (NSDF…VTLT). Residues 64 to 90 (SGKEVKGEEKGENQNSKFEVRLLRDPA) are compositionally biased toward basic and acidic residues. A phosphoserine mark is found at S93, S99, and S100. The O-linked (Xyl...) (chondroitin sulfate) serine glycan is linked to S93. The O-linked (GalNAc...) threonine glycan is linked to T115. Basic and acidic residues predominate over residues 118 to 133 (GNEKWTEGGGHSREGV). 4 positions are modified to phosphoserine: S129, S147, S190, and S220. 2 stretches are compositionally biased toward basic and acidic residues: residues 148–192 (KEAK…DSGE) and 200–249 (KRSE…KPQE). The O-linked (Xyl...) (chondroitin sulfate) serine glycan is linked to S237. Positions 251–280 (TDQDQSQEESQEGEEGEEGEEGEEGEEDSA) are enriched in acidic residues. Phosphoserine is present on residues S256, S260, S300, S301, S318, and S342. The segment covering 306–322 (PLSEERRPSPKESKEAD) has biased composition (basic and acidic residues). Y348 is subject to Sulfotyrosine. Basic and acidic residues-rich tracts occupy residues 363–409 (RGSE…ERSY) and 421–455 (GREP…DTAK). Phosphoserine occurs at positions 365, 375, and 378. Residue Y472 is modified to Sulfotyrosine. The span at 491–504 (EESREEVRFPDRQY) shows a compositional bias: basic and acidic residues. A phosphoserine mark is found at S493, S532, and S543. Residues Y566 and Y624 each carry the sulfotyrosine modification. The tract at residues 622–646 (DFYDSEEQMGPHQEANDEKARADQR) is disordered. Phosphoserine is present on S626. Residues 635–646 (EANDEKARADQR) are compositionally biased toward basic and acidic residues.

The protein belongs to the chromogranin/secretogranin protein family. In terms of assembly, interacts with ITPR1 in the secretory granules.

It localises to the secreted. Its function is as follows. Secretogranin-1 is a neuroendocrine secretory granule protein, which may be the precursor for other biologically active peptides. The protein is Secretogranin-1 (Chgb) of Mus musculus (Mouse).